Here is a 197-residue protein sequence, read N- to C-terminus: Glycerol-3-phosphate acyltransferase (197 aa).

Helical transmembrane passes span 1-21 (MNIL…GFLI), 50-70 (WPAL…VKIA), 77-97 (GLIE…PIWL), 111-131 (MFLA…LIVL), 136-156 (FVSL…FFYL), and 157-177 (GNYM…VIWK).

Belongs to the PlsY family. In terms of assembly, probably interacts with PlsX.

Its subcellular location is the cell inner membrane. The enzyme catalyses an acyl phosphate + sn-glycerol 3-phosphate = a 1-acyl-sn-glycero-3-phosphate + phosphate. It functions in the pathway lipid metabolism; phospholipid metabolism. In terms of biological role, catalyzes the transfer of an acyl group from acyl-phosphate (acyl-PO(4)) to glycerol-3-phosphate (G3P) to form lysophosphatidic acid (LPA). This enzyme utilizes acyl-phosphate as fatty acyl donor, but not acyl-CoA or acyl-ACP. This is Glycerol-3-phosphate acyltransferase from Prochlorococcus marinus (strain MIT 9312).